A 671-amino-acid polypeptide reads, in one-letter code: Kinesin-like protein KIF2C (671 aa).

Positions 1–200 (MIDFDDVAAI…CHPLTMTDPI (200 aa)) are globular. A disordered region spans residues 36-62 (KQKRRSVNSKIPAPKESLRTRSTRMST). Ser41 is subject to Phosphoserine; by AURKB. A Microtubule tip localization signal motif is present at residues 44-47 (SKIP). A phosphoserine mark is found at Ser52, Ser57, Ser61, Ser112, Ser121, Ser133, and Ser138. Residues 153–184 (EKKAQNSEMRMKRAQEYDSSFPNWEFARMIKE) are negative regulator of microtubule-binding. Intrachain disulfides connect Cys191–Cys233 and Cys290–Cys506. The Kinesin motor domain maps to 204–534 (RICVCVRKRP…LRYADRVKEL (331 aa)). Residue 294–301 (GQTGSGKT) coordinates ATP. Ser465, Ser567, and Ser579 each carry phosphoserine. Residues 564-604 (GNLSKEEEELSSQMSSFNEAMTQIRELEERAVEELKEIIQQ) adopt a coiled-coil conformation.

It belongs to the TRAFAC class myosin-kinesin ATPase superfamily. Kinesin family. MCAK/KIF2 subfamily. As to quaternary structure, interacts with CENPH. Interacts with MTUS2/TIP150; the interaction is direct. Interacts with MAPRE1; the interaction is direct, regulated by phosphorylation and is probably required for targeting to growing microtubule plus ends. Interacts with KIF18B at microtubule tips; this interaction increases the affinity of both partners for microtubule plus ends and is required for robust microtubule depolymerization. Phosphorylation by AURKA or AURKB strongly reduces KIF18B-binding. Post-translationally, phosphorylation by AURKB, regulates association with centromeres and kinetochores and the microtubule depolymerization activity. Ubiquitinated.

It is found in the cytoplasm. The protein resides in the cytoskeleton. The protein localises to the nucleus. It localises to the chromosome. Its subcellular location is the centromere. It is found in the kinetochore. In complex with KIF18B, constitutes the major microtubule plus-end depolymerizing activity in mitotic cells. Regulates the turnover of microtubules at the kinetochore and functions in chromosome segregation during mitosis. Plays a role in chromosome congression and is required for the lateral to end-on conversion of the chromosome-microtubule attachment. This Macaca fascicularis (Crab-eating macaque) protein is Kinesin-like protein KIF2C (KIF2C).